A 249-amino-acid chain; its full sequence is MLIQAVTIFPEMFDSITRYGVTGRANRQGIWQFEAVNPRKFADNRLGYIDDRPFGGGPGMIMMAPPLHAAIEHAKAQSSQTAKVIYLSPQGKPLTHQKAAELAELTHLILLCGRYEGIDERLLQSSVDEEISIGDFVVSGGELPAMMLMDAVLRLVPGILGDIQSAEQDSFSSGILDCPHYTKPLEFQGMAVPEVLRSGNHGLIAEWRLEQSLRRTLERRPDLLEKRVLIPKESRLLNKILQEQREIQS.

Residues Gly-113 and 133–138 (IGDFVV) contribute to the S-adenosyl-L-methionine site.

Belongs to the RNA methyltransferase TrmD family. In terms of assembly, homodimer.

The protein localises to the cytoplasm. It catalyses the reaction guanosine(37) in tRNA + S-adenosyl-L-methionine = N(1)-methylguanosine(37) in tRNA + S-adenosyl-L-homocysteine + H(+). Its function is as follows. Specifically methylates guanosine-37 in various tRNAs. The protein is tRNA (guanine-N(1)-)-methyltransferase of Neisseria gonorrhoeae (strain ATCC 700825 / FA 1090).